A 20-amino-acid polypeptide reads, in one-letter code: Dihydrolipoamide-residue succinyltransferase component of 2-oxoglutarate dehydrogenase complex (20 aa).

Belongs to the 2-oxoacid dehydrogenase family. As to quaternary structure, forms a 24-polypeptide structural core with octahedral symmetry. (R)-lipoate serves as cofactor.

It localises to the mitochondrion membrane. The catalysed reaction is N(6)-[(R)-dihydrolipoyl]-L-lysyl-[protein] + succinyl-CoA = N(6)-[(R)-S(8)-succinyldihydrolipoyl]-L-lysyl-[protein] + CoA. It functions in the pathway amino-acid degradation; L-lysine degradation via saccharopine pathway; glutaryl-CoA from L-lysine: step 6/6. Its function is as follows. The 2-oxoglutarate dehydrogenase complex catalyzes the overall conversion of 2-oxoglutarate to succinyl-CoA and CO(2). It contains multiple copies of three enzymatic components: 2-oxoglutarate dehydrogenase (E1), dihydrolipoamide succinyltransferase (E2) and lipoamide dehydrogenase (E3). This chain is Dihydrolipoamide-residue succinyltransferase component of 2-oxoglutarate dehydrogenase complex, found in Solanum tuberosum (Potato).